The chain runs to 421 residues: UDP-N-acetylglucosamine 1-carboxyvinyltransferase 2 (421 aa).

Position 22-23 (22-23 (KN)) interacts with phosphoenolpyruvate. Arg-94 is a binding site for UDP-N-acetyl-alpha-D-glucosamine. Residue Cys-118 is the Proton donor of the active site. Cys-118 is subject to 2-(S-cysteinyl)pyruvic acid O-phosphothioketal. 2 residues coordinate UDP-N-acetyl-alpha-D-glucosamine: Asp-308 and Ile-330.

It belongs to the EPSP synthase family. MurA subfamily.

The protein localises to the cytoplasm. It carries out the reaction phosphoenolpyruvate + UDP-N-acetyl-alpha-D-glucosamine = UDP-N-acetyl-3-O-(1-carboxyvinyl)-alpha-D-glucosamine + phosphate. The protein operates within cell wall biogenesis; peptidoglycan biosynthesis. In terms of biological role, cell wall formation. Adds enolpyruvyl to UDP-N-acetylglucosamine. The protein is UDP-N-acetylglucosamine 1-carboxyvinyltransferase 2 of Lactococcus lactis subsp. lactis (strain IL1403) (Streptococcus lactis).